The chain runs to 431 residues: Adenylosuccinate synthetase (431 aa).

GTP contacts are provided by residues 12 to 18 (GDEGKGK) and 40 to 42 (GHT). The active-site Proton acceptor is the aspartate 13. Residues aspartate 13 and glycine 40 each contribute to the Mg(2+) site. IMP contacts are provided by residues 13 to 16 (DEGK), 38 to 41 (NAGH), threonine 131, arginine 145, glutamine 225, threonine 240, and arginine 304. The active-site Proton donor is the histidine 41. 300 to 306 (TNTGRRR) is a substrate binding site. GTP is bound by residues arginine 306, 332–334 (KLD), and 414–416 (STS).

Belongs to the adenylosuccinate synthetase family. In terms of assembly, homodimer. The cofactor is Mg(2+).

It is found in the cytoplasm. It carries out the reaction IMP + L-aspartate + GTP = N(6)-(1,2-dicarboxyethyl)-AMP + GDP + phosphate + 2 H(+). It participates in purine metabolism; AMP biosynthesis via de novo pathway; AMP from IMP: step 1/2. Plays an important role in the de novo pathway of purine nucleotide biosynthesis. Catalyzes the first committed step in the biosynthesis of AMP from IMP. In Methylocella silvestris (strain DSM 15510 / CIP 108128 / LMG 27833 / NCIMB 13906 / BL2), this protein is Adenylosuccinate synthetase.